Here is a 158-residue protein sequence, read N- to C-terminus: SsrA-binding protein (158 aa).

The segment at 133 to 158 is disordered; sequence QLHDKRETEKKRDWNKEKGRLLRDKH.

Belongs to the SmpB family.

It localises to the cytoplasm. Required for rescue of stalled ribosomes mediated by trans-translation. Binds to transfer-messenger RNA (tmRNA), required for stable association of tmRNA with ribosomes. tmRNA and SmpB together mimic tRNA shape, replacing the anticodon stem-loop with SmpB. tmRNA is encoded by the ssrA gene; the 2 termini fold to resemble tRNA(Ala) and it encodes a 'tag peptide', a short internal open reading frame. During trans-translation Ala-aminoacylated tmRNA acts like a tRNA, entering the A-site of stalled ribosomes, displacing the stalled mRNA. The ribosome then switches to translate the ORF on the tmRNA; the nascent peptide is terminated with the 'tag peptide' encoded by the tmRNA and targeted for degradation. The ribosome is freed to recommence translation, which seems to be the essential function of trans-translation. This chain is SsrA-binding protein, found in Beijerinckia indica subsp. indica (strain ATCC 9039 / DSM 1715 / NCIMB 8712).